We begin with the raw amino-acid sequence, 403 residues long: Cytochrome P450 monooxygenase ustC (403 aa).

Residues 1-18 form the signal peptide; that stretch reads MSPFIFAVTLTFAILALG. N-linked (GlcNAc...) asparagine glycans are attached at residues N52 and N92. Residue C318 coordinates heme.

Belongs to the cytochrome P450 family. It depends on heme as a cofactor.

It participates in mycotoxin biosynthesis. In terms of biological role, cytochrome P450 monooxygenase; part of the gene cluster that mediates the biosynthesis of the secondary metabolite ustiloxin B, an antimitotic tetrapeptide. First, ustA is processed by the subtilisin-like endoprotease Kex2 that is outside the ustiloxin B gene cluster, at the C-terminal side of Arg-Lys, after transfer to Golgi apparatus through the endoplasmic reticulum (ER). Cleavage by KEX2 generates 16 peptides YAIG-I to YAIG-XVI. To process the precursor peptide further, at least two peptidases are necessary to cleave the N-terminal and C-terminal sides of the Tyr-Ala-Ile-Gly core peptide which serves as backbone for the synthesis of ustiloxin B, through cyclization and modification of the tyrosine with a non-protein coding amino acid, norvaline. One of the two peptidases must be the serine peptidase ustP; and the other pepdidase is probably ustH. Macrocyclization of the core peptide derived from ustA requires the tyrosinase ustQ, as well as the homologous oxidases ustYa and ustYb, and leads to the production of the first cyclization product N-desmethylustiloxin F. For the formation of N-desmethylustiloxin F, three oxidation steps are required, hydroxylation at the benzylic position, hydroxylation at either the aromatic ring of Tyr or beta-position of Ile, and oxidative cyclization. UstQ may catalyze the oxidation of a phenol moiety, whereas the ustYa and ustYb are most likely responsible for the remaining two-step oxidations. N-desmethylustiloxin F is then methylated by ustM to yield ustiloxin F which in turn substrate of the cytochrome P450 monooxygenase ustC which catalyzes the formation of S-deoxyustiloxin H. The flavoprotein monooxygenases ustF1 and ustF2 then participate in the modification of the side chain of S-deoxyustiloxin H, leading to the synthesis of an oxime intermediate, via ustiloxin H. Finally, carboxylative dehydration performed by the cysteine desulfurase-like protein ustD yields ustiloxin B. The protein is Cytochrome P450 monooxygenase ustC of Aspergillus flavus (strain ATCC 200026 / FGSC A1120 / IAM 13836 / NRRL 3357 / JCM 12722 / SRRC 167).